Reading from the N-terminus, the 502-residue chain is ATP synthase subunit alpha, sodium ion specific (502 aa).

169–176 (GDRQTGKT) contributes to the ATP binding site.

Belongs to the ATPase alpha/beta chains family. In terms of assembly, F-type ATPases have 2 components, CF(1) - the catalytic core - and CF(0) - the membrane proton channel. CF(1) has five subunits: alpha(3), beta(3), gamma(1), delta(1), epsilon(1). CF(0) has three main subunits: a, b and c.

Its subcellular location is the cell membrane. The enzyme catalyses 4 Na(+)(in) + ATP + H2O = 4 Na(+)(out) + ADP + phosphate + H(+). With respect to regulation, inhibited by nitrate. Produces ATP from ADP in the presence of a sodium ion gradient across the membrane. The alpha chain is a regulatory subunit. The protein is ATP synthase subunit alpha, sodium ion specific of Acetobacterium woodii (strain ATCC 29683 / DSM 1030 / JCM 2381 / KCTC 1655 / WB1).